Reading from the N-terminus, the 397-residue chain is Serpin B10 (397 aa).

A disulfide bridge links cysteine 68 with cysteine 395. A Nuclear localization signal motif is present at residues 74–77 (KKRK).

This sequence belongs to the serpin family. Ov-serpin subfamily. Expressed specifically in myeloid cells and the bone marrow.

It localises to the nucleus. Its subcellular location is the cytoplasm. In terms of biological role, protease inhibitor that may play a role in the regulation of protease activities during hematopoiesis and apoptosis induced by TNF. May regulate protease activities in the cytoplasm and in the nucleus. This Homo sapiens (Human) protein is Serpin B10 (SERPINB10).